The chain runs to 312 residues: RNA pseudouridylate synthase domain-containing protein 1 (312 aa).

Position 1 is an N-acetylmethionine (Met1). Asp67 is an active-site residue. A disordered region spans residues 256–298; sequence ATPDPDPEDRGPRPGSPSALLPGPGRPPPPPTKPPETEAQRGP. The span at 279 to 289 shows a compositional bias: pro residues; that stretch reads PGRPPPPPTKP.

This sequence belongs to the pseudouridine synthase RluA family.

This chain is RNA pseudouridylate synthase domain-containing protein 1 (RPUSD1), found in Homo sapiens (Human).